The primary structure comprises 617 residues: tRNA-dihydrouridine(47) synthase [NAD(P)(+)] (617 aa).

The C3H1-type zinc-finger motif lies at 42-70; it reads KENNALCPAISIGNECPYKENCKFPHDVE. The tract at residues 160–193 is disordered; sequence EEKPDPSSKVSNIPEENRDATSAISEGKETESVS. Residues 245 to 247 and glutamine 308 each bind FMN; that span reads PLT. The active-site Proton donor is cysteine 340. FMN is bound by residues lysine 380, histidine 411, 460–462, and 483–484; these read NGD and AR.

It belongs to the Dus family. Dus3 subfamily. FMN is required as a cofactor.

The protein resides in the cytoplasm. Its subcellular location is the nucleus. The enzyme catalyses 5,6-dihydrouridine(47) in tRNA + NAD(+) = uridine(47) in tRNA + NADH + H(+). The catalysed reaction is 5,6-dihydrouridine(47) in tRNA + NADP(+) = uridine(47) in tRNA + NADPH + H(+). It carries out the reaction a 5,6-dihydrouridine in mRNA + NAD(+) = a uridine in mRNA + NADH + H(+). It catalyses the reaction a 5,6-dihydrouridine in mRNA + NADP(+) = a uridine in mRNA + NADPH + H(+). Its function is as follows. Catalyzes the synthesis of dihydrouridine, a modified base, in various RNAs, such as tRNAs and mRNAs. Modifies the uridine in position 47 (U47) in the D-loop of tRNAs. Also able to mediate formation of dihydrouridine outside of the D-loop of tRNAs. Catalyzes the synthesis of dihydrouridine in some mRNAs, thereby affecting their translation. Dus3-mediated dihydrouridylation of the mRNA encoding alpha-tubulin nda2 is required for meiotic chromosome segregation. This chain is tRNA-dihydrouridine(47) synthase [NAD(P)(+)], found in Schizosaccharomyces pombe (strain 972 / ATCC 24843) (Fission yeast).